The following is a 281-amino-acid chain: uncharacterized protein (281 aa).

It is found in the plastid. The protein resides in the chloroplast. This is an uncharacterized protein from Euglena gracilis.